A 186-amino-acid polypeptide reads, in one-letter code: Probable GTP-binding protein EngB (186 aa).

The 169-residue stretch at 18–186 folds into the EngB-type G domain; that stretch reads SKKEVCLIGR…LMLKIIDVIS (169 aa). GTP is bound by residues 26–33, 52–56, 69–72, 135–138, and 166–168; these read GRSNVGKS, GRTVT, DLPG, NKID, and ISA. Mg(2+)-binding residues include serine 33 and threonine 54.

Belongs to the TRAFAC class TrmE-Era-EngA-EngB-Septin-like GTPase superfamily. EngB GTPase family. Mg(2+) is required as a cofactor.

Functionally, necessary for normal cell division and for the maintenance of normal septation. This is Probable GTP-binding protein EngB from Mycoplasmoides gallisepticum (strain R(low / passage 15 / clone 2)) (Mycoplasma gallisepticum).